We begin with the raw amino-acid sequence, 295 residues long: Tyrosine recombinase XerD (295 aa).

Residues 1 to 85 (METIIEEYLR…TIRSFHQFAI (85 aa)) form the Core-binding (CB) domain. Residues 106–289 (KLPDVLNVDE…SKSQIRKMYN (184 aa)) enclose the Tyr recombinase domain. Catalysis depends on residues arginine 146, lysine 170, histidine 241, arginine 244, and histidine 267. Tyrosine 276 functions as the O-(3'-phospho-DNA)-tyrosine intermediate in the catalytic mechanism.

It belongs to the 'phage' integrase family. XerD subfamily. As to quaternary structure, forms a cyclic heterotetrameric complex composed of two molecules of XerC and two molecules of XerD.

Its subcellular location is the cytoplasm. Its function is as follows. Site-specific tyrosine recombinase, which acts by catalyzing the cutting and rejoining of the recombining DNA molecules. The XerC-XerD complex is essential to convert dimers of the bacterial chromosome into monomers to permit their segregation at cell division. It also contributes to the segregational stability of plasmids. The sequence is that of Tyrosine recombinase XerD from Staphylococcus aureus (strain COL).